The primary structure comprises 423 residues: Large ribosomal subunit protein mL37 (423 aa).

The N-terminal 29 residues, 1 to 29, are a transit peptide targeting the mitochondrion; sequence MALASGPALRALAGSGRLGLGGYGTPKRG.

It belongs to the mitochondrion-specific ribosomal protein mL37 family. In terms of assembly, component of the mitochondrial ribosome large subunit (39S) which comprises a 16S rRNA and about 50 distinct proteins.

Its subcellular location is the mitochondrion. The polypeptide is Large ribosomal subunit protein mL37 (Mrpl37) (Mus musculus (Mouse)).